The chain runs to 188 residues: dCTP deaminase (188 aa).

DCTP contacts are provided by residues 111–116 (KSTYAR), 135–137 (TLE), glutamine 156, tyrosine 170, and glutamine 180. The Proton donor/acceptor role is filled by glutamate 137.

It belongs to the dCTP deaminase family. As to quaternary structure, homotrimer.

The enzyme catalyses dCTP + H2O + H(+) = dUTP + NH4(+). It participates in pyrimidine metabolism; dUMP biosynthesis; dUMP from dCTP (dUTP route): step 1/2. Its function is as follows. Catalyzes the deamination of dCTP to dUTP. In Paracidovorax citrulli (strain AAC00-1) (Acidovorax citrulli), this protein is dCTP deaminase.